Reading from the N-terminus, the 545-residue chain is DNA mismatch repair protein MutL (545 aa).

Positions 516 to 545 (GRRSGARGGGEARPRPQEESFPEAPLPREP) are disordered.

It belongs to the DNA mismatch repair MutL/HexB family.

Its function is as follows. This protein is involved in the repair of mismatches in DNA. It is required for dam-dependent methyl-directed DNA mismatch repair. May act as a 'molecular matchmaker', a protein that promotes the formation of a stable complex between two or more DNA-binding proteins in an ATP-dependent manner without itself being part of a final effector complex. This chain is DNA mismatch repair protein MutL, found in Thermus thermophilus (strain ATCC BAA-163 / DSM 7039 / HB27).